The primary structure comprises 490 residues: Ketol-acid reductoisomerase (NADP(+)) (490 aa).

The KARI N-terminal Rossmann domain maps to 15–208 (INLQKCKLID…GSHHAGILHS (194 aa)). NADP(+)-binding positions include 45–48 (CGSQ), arginine 68, serine 78, and 108–110 (DKQ). The active site involves histidine 132. Glycine 158 contacts NADP(+). KARI C-terminal knotted domains are found at residues 209–344 (SFIA…KCNI) and 345–484 (YYKQ…MTSM). Mg(2+) contacts are provided by aspartate 217, glutamate 221, glutamate 389, and glutamate 393. Residue serine 414 coordinates substrate.

The protein belongs to the ketol-acid reductoisomerase family. Requires Mg(2+) as cofactor.

It carries out the reaction (2R)-2,3-dihydroxy-3-methylbutanoate + NADP(+) = (2S)-2-acetolactate + NADPH + H(+). The catalysed reaction is (2R,3R)-2,3-dihydroxy-3-methylpentanoate + NADP(+) = (S)-2-ethyl-2-hydroxy-3-oxobutanoate + NADPH + H(+). It participates in amino-acid biosynthesis; L-isoleucine biosynthesis; L-isoleucine from 2-oxobutanoate: step 2/4. Its pathway is amino-acid biosynthesis; L-valine biosynthesis; L-valine from pyruvate: step 2/4. Involved in the biosynthesis of branched-chain amino acids (BCAA). Catalyzes an alkyl-migration followed by a ketol-acid reduction of (S)-2-acetolactate (S2AL) to yield (R)-2,3-dihydroxy-isovalerate. In the isomerase reaction, S2AL is rearranged via a Mg-dependent methyl migration to produce 3-hydroxy-3-methyl-2-ketobutyrate (HMKB). In the reductase reaction, this 2-ketoacid undergoes a metal-dependent reduction by NADPH to yield (R)-2,3-dihydroxy-isovalerate. The sequence is that of Ketol-acid reductoisomerase (NADP(+)) from Buchnera aphidicola subsp. Melaphis rhois.